The following is a 425-amino-acid chain: Threonine synthase (425 aa).

Position 105 is an N6-(pyridoxal phosphate)lysine (Lys-105).

It belongs to the threonine synthase family. Requires pyridoxal 5'-phosphate as cofactor.

It carries out the reaction O-phospho-L-homoserine + H2O = L-threonine + phosphate. The protein operates within amino-acid biosynthesis; L-threonine biosynthesis; L-threonine from L-aspartate: step 5/5. Catalyzes the gamma-elimination of phosphate from L-phosphohomoserine and the beta-addition of water to produce L-threonine. The polypeptide is Threonine synthase (thrC) (Haemophilus influenzae (strain ATCC 51907 / DSM 11121 / KW20 / Rd)).